Reading from the N-terminus, the 462-residue chain is Cysteine proteinase RD21A (462 aa).

Residues 1–21 form the signal peptide; that stretch reads MGFLKPTMAILFLAMVAVSSA. Positions 22–136 are cleaved as a propeptide — activation peptide; that stretch reads VDMSIISYDE…LRYEARVGDE (115 aa). The N-linked (GlcNAc...) asparagine glycan is linked to asparagine 90. 5 disulfide bridges follow: cysteine 158–cysteine 200, cysteine 192–cysteine 233, cysteine 291–cysteine 342, cysteine 375–cysteine 387, and cysteine 381–cysteine 402. Cysteine 161 is an active-site residue. Residues histidine 297 and asparagine 317 contribute to the active site. The propeptide at 353 to 462 is removed in mature form; that stretch reads KNGENPPNPG…FWSQGRKNIA (110 aa). Asparagine 414 carries an N-linked (GlcNAc...) asparagine glycan.

Belongs to the peptidase C1 family. In terms of assembly, interacts with SERPIN1. Interacts with PRN2. Interacts with WSCP. Interacts with TZF4, TZF5 and TZF6.

It localises to the vacuole. The protein resides in the golgi apparatus. Its subcellular location is the cytoplasm. It is found in the stress granule. The protein localises to the P-body. With respect to regulation, inhibited by the cysteine protease inhibitor E64 (L-trans-epoxysuccinyl-leucylamide-(4-guanido)-butane). Functionally, cysteine protease that plays a role in immunity, senescence, and biotic and abiotic stresses. Involved in immunity against the necrotrophic fungal pathogen Botrytis cinerea. Involved in elicitor-stimulated programmed cell death (PCD). During infection by the necrotrophic fungal pathogen Botrytis cinerea, functions as a PCD-promoting protease that is released from the ER body or vacuole to the cytoplasm. Accumulates in endoplasmic reticulum-derived bodies in epidermal cells and may participate in cell death in stressed or injured cells. Involved in water stress-induced cell death through its protease activity that is released to the cytoplasm after vacuolar collapse. Possesses protease activity in vitro and is involved in cell death in the transmitting tract and septum epidermis during flower development. Possesses peptide ligase activity. Can ligate peptides to unmodified N-termini of acceptor proteins. Probably ligates through a thioester intermediate. This is Cysteine proteinase RD21A from Arabidopsis thaliana (Mouse-ear cress).